The sequence spans 307 residues: MDRCCQRATAFACALRPTKLIDYEEMFRGAMQARAMVANPDQWADSDRDQVNTRHYLSTSMRVALDRGEFFLVYQPIIRLADNRIIGAEALLRWEHPTLGTLLPGRFIDRAENNGLMVPLTAFVLEQACRHVRSWRDHSTDPQPFVSVNVSASTICDPGFLVLVEGVLGETGLPAHALQLELAEDARLSRDEKAVTRLQELSALGVGIAIDDFGIGFSSLAYLPRLPVDVVKLGGKFIECLDGDIQARLANEQITRAMIDLGDKLGITVTAKLVETPSQAARLRAFGCKAAQGWHFAKALPVDFFRE.

In terms of domain architecture, EAL spans 54 to 307 (RHYLSTSMRV…KALPVDFFRE (254 aa)). Helical transmembrane passes span 158 to 178 (PGFL…AHAL) and 203 to 223 (ALGV…LAYL).

It is found in the cell membrane. This is an uncharacterized protein from Mycobacterium tuberculosis (strain CDC 1551 / Oshkosh).